The chain runs to 218 residues: Protein Nef (218 aa).

The tract at residues 1 to 44 (MGGKWSKMAGWSTVRERMRRAEPARERMRRAEPRAEPAADGVGA) is disordered. Glycine 2 carries N-myristoyl glycine; by host lipidation. Serine 6 is subject to Phosphoserine; by host. A compositionally biased stretch (basic and acidic residues) spans 14 to 37 (VRERMRRAEPARERMRRAEPRAEP). The interval 74–77 (EDEE) is acidic; interacts with host PACS1 and PACS2; stabilizes the interaction of NEF/MHC-I with host AP1M1; necessary for MHC-I internalization. The segment at 81–90 (PVKPQVPLRP) is SH3-binding; interaction with Src family tyrosine kinases. Positions 84–87 (PQVP) match the PxxP; stabilizes the interaction of NEF/MHC-I with host AP1M1; necessary for MHC-I internalization motif. The mediates dimerization, Nef-PTE1 interaction stretch occupies residues 120 to 136 (DILDLWVYHTQGYFPDW). A binding to ATP6V1H region spans residues 160–192 (VEPEKIEEANEGENNSLLHPMSQHGMDDPEREV). Positions 176-177 (LL) match the Dileucine internalization motif; necessary for CD4 internalization motif. The Diacidic; necessary for CD4 internalization signature appears at 186-187 (DD).

This sequence belongs to the lentivirus primate group Nef protein family. In terms of assembly, monomer; cytosolic form. Homodimer; membrane bound form. Interacts with Nef associated p21-activated kinase (PAK2); this interaction activates PAK2. Associates with the Nef-MHC-I-AP1 complex; this complex is required for MHC-I internalization. Interacts (via C-terminus) with host PI3-kinase. Interacts with host PACS1; this interaction seems to be weak. Interacts with host PACS2. Interacts with host LCK and MAPK3; these interactions inhibit the kinase activity of the latter. Interacts with host ATP6V1H; this interaction may play a role in CD4 endocytosis. Associates with the CD4-Nef-AP2 complex; this complex is required for CD4 internalization. Interacts with host AP2 subunit alpha and AP2 subunit sigma2. Interacts with TCR-zeta chain; this interaction up-regulates the Fas ligand (FasL) surface expression. Interacts with host HCK, LYN, and SRC; these interactions activate the Src family kinases. Interacts with MAP3K5; this interaction inhibits the Fas and TNFR-mediated death signals. Interacts with beta-COP and PTE1. Interacts with human RACK1; this increases Nef phosphorylation by PKC. Interacts with TP53; this interaction decreases the half-life of TP53, protecting the infected cell against p53-mediated apoptosis. The virion-associated Nef proteins are cleaved by the viral protease to release the soluble C-terminal core protein. Nef is probably cleaved concomitantly with viral structural proteins on maturation of virus particles. In terms of processing, myristoylated. Post-translationally, phosphorylated on serine residues, probably by host PKCdelta and theta.

The protein localises to the host cell membrane. It localises to the virion. The protein resides in the secreted. Its subcellular location is the host Golgi apparatus membrane. Functionally, factor of infectivity and pathogenicity, required for optimal virus replication. Alters numerous pathways of T-lymphocyte function and down-regulates immunity surface molecules in order to evade host defense and increase viral infectivity. Alters the functionality of other immunity cells, like dendritic cells, monocytes/macrophages and NK cells. In terms of biological role, in infected CD4(+) T-lymphocytes, down-regulates the surface MHC-I, mature MHC-II, CD4, CD28, CCR5 and CXCR4 molecules. Mediates internalization and degradation of host CD4 through the interaction of with the cytoplasmic tail of CD4, the recruitment of AP-2 (clathrin adapter protein complex 2), internalization through clathrin coated pits, and subsequent transport to endosomes and lysosomes for degradation. Diverts host MHC-I molecules to the trans-Golgi network-associated endosomal compartments by an endocytic pathway to finally target them for degradation. MHC-I down-regulation may involve AP-1 (clathrin adapter protein complex 1) or possibly Src family kinase-ZAP70/Syk-PI3K cascade recruited by PACS2. In consequence infected cells are masked for immune recognition by cytotoxic T-lymphocytes. Decreasing the number of immune receptors also prevents reinfection by more HIV particles (superinfection). Down-regulates host SERINC3 and SERINC5 thereby excluding these proteins from the viral particles. Virion infectivity is drastically higher when SERINC3 or SERINC5 are excluded from the viral envelope, because these host antiviral proteins impair the membrane fusion event necessary for subsequent virion penetration. Its function is as follows. Bypasses host T-cell signaling by inducing a transcriptional program nearly identical to that of anti-CD3 cell activation. Interaction with TCR-zeta chain up-regulates the Fas ligand (FasL). Increasing surface FasL molecules and decreasing surface MHC-I molecules on infected CD4(+) cells send attacking cytotoxic CD8+ T-lymphocytes into apoptosis. Plays a role in optimizing the host cell environment for viral replication without causing cell death by apoptosis. Protects the infected cells from apoptosis in order to keep them alive until the next virus generation is ready to strike. Inhibits the Fas and TNFR-mediated death signals by blocking MAP3K5/ASK1. Decreases the half-life of TP53, protecting the infected cell against p53-mediated apoptosis. Inhibits the apoptotic signals regulated by the Bcl-2 family proteins through the formation of a Nef/PI3-kinase/PAK2 complex that leads to activation of PAK2 and induces phosphorylation of host BAD. Functionally, extracellular Nef protein targets CD4(+) T-lymphocytes for apoptosis by interacting with CXCR4 surface receptors. The sequence is that of Protein Nef from Homo sapiens (Human).